Reading from the N-terminus, the 846-residue chain is Integrin beta-PS (846 aa).

Positions 1–28 (MILERNRRCQLALLMIAILAAIAGQTDA) are cleaved as a signal peptide. The Extracellular segment spans residues 29–777 (QKAAKLTAVS…NKECPAKVFM (749 aa)). Residues cysteine 46 and cysteine 55 are joined by a disulfide bond. N-linked (GlcNAc...) asparagine glycosylation is present at asparagine 72. The VWFA domain occupies 186–419 (DLYYLMDLSK…ELVKEEYRKI (234 aa)). Residues cysteine 249 and cysteine 252 are joined by a disulfide bond. Asparagine 266 and asparagine 277 each carry an N-linked (GlcNAc...) asparagine glycan. An intrachain disulfide couples cysteine 300 to cysteine 341. 2 N-linked (GlcNAc...) asparagine glycosylation sites follow: asparagine 403 and asparagine 428. Disulfide bonds link cysteine 441–cysteine 453, cysteine 473–cysteine 741, cysteine 507–cysteine 530, cysteine 522–cysteine 533, cysteine 535–cysteine 544, cysteine 546–cysteine 579, cysteine 561–cysteine 577, cysteine 571–cysteine 582, cysteine 584–cysteine 599, cysteine 601–cysteine 624, cysteine 606–cysteine 622, cysteine 614–cysteine 627, cysteine 629–cysteine 638, cysteine 640–cysteine 664, cysteine 647–cysteine 662, cysteine 656–cysteine 667, cysteine 669–cysteine 682, cysteine 685–cysteine 688, cysteine 692–cysteine 701, cysteine 698–cysteine 771, and cysteine 719–cysteine 749. I-EGF domains follow at residues 507–545 (CENP…NKCE), 546–600 (CSAT…KHCE), 601–639 (CDNF…SNCG), and 640–683 (CQES…RHCE). N-linked (GlcNAc...) asparagine glycosylation occurs at asparagine 557. N-linked (GlcNAc...) asparagine glycosylation occurs at asparagine 603. Residue asparagine 644 is glycosylated (N-linked (GlcNAc...) asparagine). The N-linked (GlcNAc...) asparagine glycan is linked to asparagine 718. Residues 778–798 (LGIVMGVIAAIVLVGLAILLL) traverse the membrane as a helical segment. Residues 799–846 (WKLLTTIHDRREFARFEKERMNAKWDTGENPIYKQATSTFKNPMYAGK) lie on the Cytoplasmic side of the membrane. Phosphotyrosine is present on residues tyrosine 831 and tyrosine 843.

Belongs to the integrin beta chain family. Heterodimer of an alpha and a beta subunit. Beta-PS associates with either alpha-PS1, alpha-PS2, alpha-PS3, alpha-PS4 or alpha-PS5. In ovaries, strongly expressed in follicle cells. In oocytes, expressed in the forming dorsal appendages (at protein level). Expressed in the embryonic dorsal cuticle, the larval eye and the wing imaginal disk. In testes, detected at the interface between somatic hub cells and cyst stem cells.

It is found in the cell membrane. It localises to the apical cell membrane. Its subcellular location is the lateral cell membrane. The protein resides in the basal cell membrane. Integrin alpha-PS1/beta-PS is a receptor for laminin. Integrin alpha-PS2/beta-PS is a receptor for Tig, wb and Ten-m. Contributes to endodermal integrity and adhesion between the midgut epithelium and the surrounding visceral muscle. Essential for migration of the primordial midgut cells and for maintaining, but not establishing, cell polarity in the midgut epithelium. The two beta subunits mediate midgut migration by distinct mechanisms: beta-PS requires rhea/talin and Itgbn does not. Required for rhea/talin correct cellular localization in the midgut. Required for many embryonic (dorsal closure and somatic muscle attachments) and postembryonic developmental processes (attachment between cell layers of imaginal disks, organization of ommatidial arrays and flight muscle development). Involved in the function and/or development of the olfactory system. In the testes, essential for shv-dependent maintenance of somatic hub cells and their localization to the apical tip. Plays a role in timely border cell migration during oogenesis. This is Integrin beta-PS (mys) from Drosophila melanogaster (Fruit fly).